We begin with the raw amino-acid sequence, 222 residues long: U-scoloptoxin(11)-Sm5a (222 aa).

This sequence belongs to the scoloptoxin-11 family. In terms of processing, contains 8 disulfide bonds. In terms of tissue distribution, expressed by the venom gland.

The protein localises to the secreted. In Scolopendra morsitans (Tanzanian blue ringleg centipede), this protein is U-scoloptoxin(11)-Sm5a.